Here is a 100-residue protein sequence, read N- to C-terminus: Urease subunit gamma (100 aa).

It belongs to the urease gamma subunit family. As to quaternary structure, heterotrimer of UreA (gamma), UreB (beta) and UreC (alpha) subunits. Three heterotrimers associate to form the active enzyme.

The protein localises to the cytoplasm. It carries out the reaction urea + 2 H2O + H(+) = hydrogencarbonate + 2 NH4(+). It participates in nitrogen metabolism; urea degradation; CO(2) and NH(3) from urea (urease route): step 1/1. The sequence is that of Urease subunit gamma from Frankia alni (strain DSM 45986 / CECT 9034 / ACN14a).